The primary structure comprises 469 residues: Flap endonuclease 1-B (469 aa).

Residues 1–103 are N-domain; it reads MGIKGLTGLL…GVLSKRLERR (103 aa). Residue aspartate 32 coordinates Mg(2+). DNA-binding residues include arginine 45 and arginine 69. Mg(2+)-binding residues include aspartate 85, glutamate 157, glutamate 159, aspartate 183, and aspartate 185. Positions 121-257 are I-domain; it reads DVDRFSRRTV…KSALKLIREY (137 aa). Position 157 (glutamate 157) interacts with DNA. DNA-binding residues include glycine 235 and aspartate 237. Position 237 (aspartate 237) interacts with Mg(2+). The disordered stretch occupies residues 274–354; that stretch reads QKAAQAAVES…GGMQIPEEWP (81 aa). Composition is skewed to acidic residues over residues 282-295 and 302-317; these read ESDE…EDEP and EMPD…EEEA. The span at 326–342 shows a compositional bias: basic residues; the sequence is PKKKKASSKTKEKRKGK. Residues 412–420 are interaction with PCNA; that stretch reads QQGRLDGFF. The tract at residues 424–469 is disordered; that stretch reads PKEKAAAPAPVGKAKGKGKIDAKAKGTKRKVDEKAESSAGKKPRKK. The span at 441 to 459 shows a compositional bias: basic and acidic residues; that stretch reads GKIDAKAKGTKRKVDEKAE.

This sequence belongs to the XPG/RAD2 endonuclease family. FEN1 subfamily. Interacts with PCNA. Three molecules of FEN1 bind to one PCNA trimer with each molecule binding to one PCNA monomer. PCNA stimulates the nuclease activity without altering cleavage specificity. Mg(2+) is required as a cofactor. Phosphorylated. Phosphorylation upon DNA damage induces relocalization to the nuclear plasma.

It localises to the nucleus. It is found in the nucleolus. Its subcellular location is the nucleoplasm. The protein resides in the mitochondrion. Structure-specific nuclease with 5'-flap endonuclease and 5'-3' exonuclease activities involved in DNA replication and repair. During DNA replication, cleaves the 5'-overhanging flap structure that is generated by displacement synthesis when DNA polymerase encounters the 5'-end of a downstream Okazaki fragment. It enters the flap from the 5'-end and then tracks to cleave the flap base, leaving a nick for ligation. Also involved in the long patch base excision repair (LP-BER) pathway, by cleaving within the apurinic/apyrimidinic (AP) site-terminated flap. Acts as a genome stabilization factor that prevents flaps from equilibrating into structures that lead to duplications and deletions. Also possesses 5'-3' exonuclease activity on nicked or gapped double-stranded DNA, and exhibits RNase H activity. Also involved in replication and repair of rDNA and in repairing mitochondrial DNA. This chain is Flap endonuclease 1-B, found in Laccaria bicolor (strain S238N-H82 / ATCC MYA-4686) (Bicoloured deceiver).